Consider the following 389-residue polypeptide: Apoptosis inhibitor U19 (389 aa).

The protein belongs to the beta-herpesvirinae UL38 protein family. As to quaternary structure, interacts with host MDM2; this interaction leads to the stabilization of host TP53.

The protein resides in the host cytoplasm. The protein localises to the host nucleus. In terms of biological role, plays a role in the inhibition of host apoptosis to facilitate efficient viral replication. Promotes stabilization and inactivation of host TP53 through interaction with host MDM2. The sequence is that of Apoptosis inhibitor U19 (U19) from Human herpesvirus 6A (strain Uganda-1102) (HHV-6 variant A).